Reading from the N-terminus, the 303-residue chain is D-alanine--D-alanine ligase (303 aa).

One can recognise an ATP-grasp domain in the interval 99 to 293 (TYRFLKDIVE…FEELVEIILK (195 aa)). 125–176 (GYPCVVKPRREGSSIGVFICESDEEFQHALKEDLPRYGSVIVQKYIPGREMT) is an ATP binding site. The Mg(2+) site is built by Asp-248, Glu-260, and Asn-262.

It belongs to the D-alanine--D-alanine ligase family. Requires Mg(2+) as cofactor. Mn(2+) is required as a cofactor.

The protein localises to the cytoplasm. It carries out the reaction 2 D-alanine + ATP = D-alanyl-D-alanine + ADP + phosphate + H(+). It participates in cell wall biogenesis; peptidoglycan biosynthesis. In terms of biological role, cell wall formation. The polypeptide is D-alanine--D-alanine ligase (Thermotoga petrophila (strain ATCC BAA-488 / DSM 13995 / JCM 10881 / RKU-1)).